An 89-amino-acid polypeptide reads, in one-letter code: Small ribosomal subunit protein uS14 (89 aa).

Belongs to the universal ribosomal protein uS14 family. In terms of assembly, part of the 30S ribosomal subunit. Contacts proteins S3 and S10.

Binds 16S rRNA, required for the assembly of 30S particles and may also be responsible for determining the conformation of the 16S rRNA at the A site. The chain is Small ribosomal subunit protein uS14 from Leuconostoc mesenteroides subsp. mesenteroides (strain ATCC 8293 / DSM 20343 / BCRC 11652 / CCM 1803 / JCM 6124 / NCDO 523 / NBRC 100496 / NCIMB 8023 / NCTC 12954 / NRRL B-1118 / 37Y).